We begin with the raw amino-acid sequence, 297 residues long: Phosphatidylglycerol--prolipoprotein diacylglyceryl transferase (297 aa).

A run of 4 helical transmembrane segments spans residues 20 to 40 (FLTI…GLFV), 50 to 70 (INPL…IIGA), 105 to 125 (AVWE…LSII), and 133 to 153 (IHLK…QSIG). A 1,2-diacyl-sn-glycero-3-phospho-(1'-sn-glycerol) is bound at residue R154. 3 helical membrane passes run 193–213 (PTFL…IFVF), 225–245 (GFIS…IEGL), and 266–286 (AQFI…FLRL).

Belongs to the Lgt family.

Its subcellular location is the cell inner membrane. It catalyses the reaction L-cysteinyl-[prolipoprotein] + a 1,2-diacyl-sn-glycero-3-phospho-(1'-sn-glycerol) = an S-1,2-diacyl-sn-glyceryl-L-cysteinyl-[prolipoprotein] + sn-glycerol 1-phosphate + H(+). It functions in the pathway protein modification; lipoprotein biosynthesis (diacylglyceryl transfer). Its function is as follows. Catalyzes the transfer of the diacylglyceryl group from phosphatidylglycerol to the sulfhydryl group of the N-terminal cysteine of a prolipoprotein, the first step in the formation of mature lipoproteins. In Prochlorococcus marinus (strain MIT 9312), this protein is Phosphatidylglycerol--prolipoprotein diacylglyceryl transferase.